The sequence spans 234 residues: Synaptogyrin-1 (234 aa).

Met-1 carries the N-acetylmethionine modification. The Cytoplasmic portion of the chain corresponds to 1-23 (MEGGAYGAGKAGGAFDPYTLVRQ). The MARVEL domain maps to 20 to 173 (LVRQPHTILR…QAVLAFQRYQ (154 aa)). Residues 24–44 (PHTILRVVSWVFSIVVFGSIV) traverse the membrane as a helical segment. The Lumenal portion of the chain corresponds to 45–71 (NEGYLNNPEEEEEFCIYNRNPNACSYG). Residues 72–92 (VTVGVLAFLTCLLYLALDVYF) traverse the membrane as a helical segment. The Cytoplasmic portion of the chain corresponds to 93–103 (PQISSVKDRKK). The helical transmembrane segment at 104-124 (AVLSDIGVSAFWAFFWFVGFC) threads the bilayer. The Lumenal portion of the chain corresponds to 125–148 (FLANQWQVSKPKDNPLNEGTDAAR). Residues 149 to 169 (AAIAFSFFSIFTWAGQAVLAF) traverse the membrane as a helical segment. Residues 170 to 234 (QRYQIGADSA…EPQGYQSQGY (65 aa)) are Cytoplasmic-facing. Residues 201 to 234 (EPSAGSDPAGMGGTYQHPANAFDAEPQGYQSQGY) form a disordered region.

The protein belongs to the synaptogyrin family.

Its subcellular location is the cytoplasmic vesicle. The protein resides in the secretory vesicle. It localises to the synaptic vesicle membrane. The protein localises to the melanosome. Functionally, may play a role in regulated exocytosis. Modulates the localization of synaptophysin/SYP into synaptic-like microvesicles and may therefore play a role in synaptic-like microvesicle formation and/or maturation. Involved in the regulation of short-term and long-term synaptic plasticity. The sequence is that of Synaptogyrin-1 from Mus musculus (Mouse).